A 424-amino-acid polypeptide reads, in one-letter code: Glutamyl-tRNA reductase (424 aa).

Residues 53-56 (TCNR), S111, 116-118 (EPQ), and Q122 contribute to the substrate site. The active-site Nucleophile is C54. 191-196 (GAGEMI) serves as a coordination point for NADP(+).

This sequence belongs to the glutamyl-tRNA reductase family. Homodimer.

It catalyses the reaction (S)-4-amino-5-oxopentanoate + tRNA(Glu) + NADP(+) = L-glutamyl-tRNA(Glu) + NADPH + H(+). It functions in the pathway porphyrin-containing compound metabolism; protoporphyrin-IX biosynthesis; 5-aminolevulinate from L-glutamyl-tRNA(Glu): step 1/2. Catalyzes the NADPH-dependent reduction of glutamyl-tRNA(Glu) to glutamate 1-semialdehyde (GSA). The sequence is that of Glutamyl-tRNA reductase from Bordetella avium (strain 197N).